A 264-amino-acid polypeptide reads, in one-letter code: uncharacterized protein (264 aa).

A run of 3 helical transmembrane segments spans residues 48 to 68 (LTITLLYLHPVSFSAILLLVF), 112 to 132 (ITPSAISSGLLVSLVLIFLLA), and 142 to 162 (LPIAIWIGLISLHPKLRSYLI). S260 is modified (phosphoserine).

It is found in the membrane. This is an uncharacterized protein from Schizosaccharomyces pombe (strain 972 / ATCC 24843) (Fission yeast).